Consider the following 207-residue polypeptide: MAKGLLFIVSAPSGTGKSSLIQALVNTHPLYSIKVSVSHTTRIIRPGECHGKHYYFISNTEFQNMIDKEEFLEYAKVFNNYYGTSKKQINYGLSTGTDVFLDIDWQGARQIRNKLPESKSIFILPPSKEELYRRLCKRGQDSDIIIKKRMNQAVSEMKHYIDYDYLIINDNFNLAVSDLYKIIRVAHLSIKHQIQRNNLLIRNLLNE.

Positions Gly4–Arg184 constitute a Guanylate kinase-like domain. Ala11–Ser18 is an ATP binding site.

This sequence belongs to the guanylate kinase family.

Its subcellular location is the cytoplasm. It catalyses the reaction GMP + ATP = GDP + ADP. Its function is as follows. Essential for recycling GMP and indirectly, cGMP. This Buchnera aphidicola subsp. Baizongia pistaciae (strain Bp) protein is Guanylate kinase.